We begin with the raw amino-acid sequence, 80 residues long: Histone H1.M6.1 (80 aa).

A disordered region spans residues 1 to 80 (MSDAAVPPKK…KAVKKAPKKK (80 aa)). Positions 11–80 (ASPKKAAAKK…KAVKKAPKKK (70 aa)) are enriched in basic residues.

The protein resides in the nucleus. Its subcellular location is the chromosome. The polypeptide is Histone H1.M6.1 (Trypanosoma cruzi).